A 534-amino-acid polypeptide reads, in one-letter code: NAD(P)H-quinone oxidoreductase chain 4 (534 aa).

14 helical membrane passes run 12 to 32 (FPWLSASILFPIGSAFVIPFF), 44 to 64 (FALSIALITFLITVGSYINGF), 96 to 116 (MPLILLTSFITALAVLAAWPV), 120 to 140 (PKLFFFLILVMDGGQIAVFAV), 144 to 164 (LLFFLTWELELIPVYLLLAIW), 176 to 196 (FIIYTAGSSIFILLAALAMGF), 220 to 240 (ILCYVGLLIAFGVKLPIVPLH), 251 to 271 (TAPVHMLLAGILLKMGGYALL), 285 to 305 (FAPLLIVLGVVNIIYAALTSF), 314 to 334 (IAYSSISHMGFVLIGIGSFSS), 340 to 360 (AMLQMVSHGLIGASLFFLVGA), 384 to 404 (FALWTACSLASLALPGMSGFV), 425 to 445 (VVMASLAAIGVILTPIYLLSM), and 472 to 492 (VYIIACLLLPIIGIGLYPRLV).

The protein belongs to the complex I subunit 4 family.

It is found in the cellular thylakoid membrane. It catalyses the reaction a plastoquinone + NADH + (n+1) H(+)(in) = a plastoquinol + NAD(+) + n H(+)(out). The catalysed reaction is a plastoquinone + NADPH + (n+1) H(+)(in) = a plastoquinol + NADP(+) + n H(+)(out). In terms of biological role, NDH-1 shuttles electrons from NAD(P)H, via FMN and iron-sulfur (Fe-S) centers, to quinones in the respiratory chain. The immediate electron acceptor for the enzyme in this species is believed to be plastoquinone. Couples the redox reaction to proton translocation (for every two electrons transferred, four hydrogen ions are translocated across the cytoplasmic membrane), and thus conserves the redox energy in a proton gradient. This is NAD(P)H-quinone oxidoreductase chain 4 from Prochlorococcus marinus (strain AS9601).